The sequence spans 208 residues: Uridine kinase (208 aa).

12–19 (GGSGGGKT) is a binding site for ATP.

This sequence belongs to the uridine kinase family.

Its subcellular location is the cytoplasm. The enzyme catalyses uridine + ATP = UMP + ADP + H(+). It catalyses the reaction cytidine + ATP = CMP + ADP + H(+). It participates in pyrimidine metabolism; CTP biosynthesis via salvage pathway; CTP from cytidine: step 1/3. The protein operates within pyrimidine metabolism; UMP biosynthesis via salvage pathway; UMP from uridine: step 1/1. This is Uridine kinase from Streptococcus equi subsp. equi (strain 4047).